Reading from the N-terminus, the 357-residue chain is Chorismate synthase (357 aa).

Arg-46 contributes to the NADP(+) binding site. Residues 123-125 (RSS), 235-236 (NA), Gly-275, 290-294 (KPTPS), and Arg-316 contribute to the FMN site.

The protein belongs to the chorismate synthase family. In terms of assembly, homotetramer. The cofactor is FMNH2.

It catalyses the reaction 5-O-(1-carboxyvinyl)-3-phosphoshikimate = chorismate + phosphate. It participates in metabolic intermediate biosynthesis; chorismate biosynthesis; chorismate from D-erythrose 4-phosphate and phosphoenolpyruvate: step 7/7. In terms of biological role, catalyzes the anti-1,4-elimination of the C-3 phosphate and the C-6 proR hydrogen from 5-enolpyruvylshikimate-3-phosphate (EPSP) to yield chorismate, which is the branch point compound that serves as the starting substrate for the three terminal pathways of aromatic amino acid biosynthesis. This reaction introduces a second double bond into the aromatic ring system. This is Chorismate synthase from Sulfurovum sp. (strain NBC37-1).